Here is a 389-residue protein sequence, read N- to C-terminus: UDP-N-acetylglucosamine--N-acetylmuramyl-(pentapeptide) pyrophosphoryl-undecaprenol N-acetylglucosamine transferase (389 aa).

UDP-N-acetyl-alpha-D-glucosamine-binding positions include 17–19 (TAG), N137, R179, S213, and Q308.

The protein belongs to the glycosyltransferase 28 family. MurG subfamily.

The protein localises to the cell membrane. It catalyses the reaction di-trans,octa-cis-undecaprenyl diphospho-N-acetyl-alpha-D-muramoyl-L-alanyl-D-glutamyl-meso-2,6-diaminopimeloyl-D-alanyl-D-alanine + UDP-N-acetyl-alpha-D-glucosamine = di-trans,octa-cis-undecaprenyl diphospho-[N-acetyl-alpha-D-glucosaminyl-(1-&gt;4)]-N-acetyl-alpha-D-muramoyl-L-alanyl-D-glutamyl-meso-2,6-diaminopimeloyl-D-alanyl-D-alanine + UDP + H(+). The protein operates within cell wall biogenesis; peptidoglycan biosynthesis. Functionally, cell wall formation. Catalyzes the transfer of a GlcNAc subunit on undecaprenyl-pyrophosphoryl-MurNAc-pentapeptide (lipid intermediate I) to form undecaprenyl-pyrophosphoryl-MurNAc-(pentapeptide)GlcNAc (lipid intermediate II). The chain is UDP-N-acetylglucosamine--N-acetylmuramyl-(pentapeptide) pyrophosphoryl-undecaprenol N-acetylglucosamine transferase from Rhodococcus erythropolis (strain PR4 / NBRC 100887).